The sequence spans 836 residues: MVTVGNYCEAEGPAGPAWTQNGLSPCFFYTLVPSTLMTLGVLALVLVLPCRRREVPAGTEELSWAAGPRVAPYALQLSLAILQMALPLASLAGRVGTARGVRLPGYLLLASVLESLASACGLWLLVVERSQARQSLAMGVWMKFRHSLGLLLLWTVTFAAENLVLVSWNSPQWWWSRADLGQQVQFGLWVLRYMTSGGLFILGLWAPGLRPQSYTLHVNEEDQDGGRNQGRSTDPRSTWRDLGRKLRLLSGYLWPRGSPSLQLTVLLCMGLMGLDRALNVLVPIFYRDIVNLLTSKAPWSSLAWTVTTYVFLKFLQGGGTGSTGFVSNLRTFLWIRVQQFTSRGVELRLFSHLHELSLRWHLGRRTGEVLRIVDRGTSSVTGLLSYLVFNIIPTLADIIIGIIYFSMFFNAWFGLIVFLCMSLYLILTIMVTEWRAKFRRDMNTQENATRARAVDSLLNFETVKYYNAEGYELERYREAILKFQGLEWKSTASLVLLNQTQNMVIGFGLLAGSLLCAYFVSERRLQVGDFVLFGTYITQLYMPLNWFGTYYRMIQTNFIDMENMFDLLKEETEVKDVPGAGPLRFHKGRVEFENVHFSYADGRETLQDVSFTVMPGQTVALVGPSGAGKSTILRLLFRFYDISSGCIRIDGQDISQVTQISLRSHIGVVPQDTVLFNDTIANNIRYGRVTAGDSEIQAAAQAAGIHDAILSFPEGYETQVGERGLKLSGGEKQRVAIARTILKAPDIILLDEATSALDTSNERAIQASLAKVCTNRTTIVVAHRLSTVVNADQILVIKDGCIIERGRHEALLSRGGVYAEMWQLQQQGQETVPEDS.

Residues 1-26 lie on the Lumenal side of the membrane; that stretch reads MVTVGNYCEAEGPAGPAWTQNGLSPC. Residues 1 to 205 form a required for the lysosomal targeting region; it reads MVTVGNYCEA…SGGLFILGLW (205 aa). The segment at 1–236 is required for ATPase activity; sequence MVTVGNYCEA…RNQGRSTDPR (236 aa). Cysteines 8 and 26 form a disulfide. A helical transmembrane segment spans residues 27 to 47; the sequence is FFYTLVPSTLMTLGVLALVLV. Residues 48 to 72 are Cytoplasmic-facing; it reads LPCRRREVPAGTEELSWAAGPRVAP. A helical membrane pass occupies residues 73-93; it reads YALQLSLAILQMALPLASLAG. Residues 94–106 lie on the Lumenal side of the membrane; it reads RVGTARGVRLPGY. The chain crosses the membrane as a helical span at residues 107-127; that stretch reads LLLASVLESLASACGLWLLVV. The Cytoplasmic segment spans residues 128–147; the sequence is ERSQARQSLAMGVWMKFRHS. Residues 148–168 form a helical membrane-spanning segment; that stretch reads LGLLLLWTVTFAAENLVLVSW. The Lumenal segment spans residues 169-185; sequence NSPQWWWSRADLGQQVQ. A helical transmembrane segment spans residues 186–206; that stretch reads FGLWVLRYMTSGGLFILGLWA. Topologically, residues 207 to 264 are cytoplasmic; it reads PGLRPQSYTLHVNEEDQDGGRNQGRSTDPRSTWRDLGRKLRLLSGYLWPRGSPSLQLT. A helical membrane pass occupies residues 265 to 285; the sequence is VLLCMGLMGLDRALNVLVPIF. The ABC transmembrane type-1 domain maps to 265 to 556; it reads VLLCMGLMGL…FGTYYRMIQT (292 aa). Over 286–305 the chain is Lumenal; the sequence is YRDIVNLLTSKAPWSSLAWT. The chain crosses the membrane as a helical span at residues 306–326; sequence VTTYVFLKFLQGGGTGSTGFV. At 327 to 375 the chain is on the cytoplasmic side; sequence SNLRTFLWIRVQQFTSRGVELRLFSHLHELSLRWHLGRRTGEVLRIVDR. A helical membrane pass occupies residues 376–396; it reads GTSSVTGLLSYLVFNIIPTLA. Position 397 (Asp397) is a topological domain, lumenal. The helical transmembrane segment at 398–418 threads the bilayer; it reads IIIGIIYFSMFFNAWFGLIVF. The Cytoplasmic portion of the chain corresponds to 419–499; that stretch reads LCMSLYLILT…STASLVLLNQ (81 aa). A helical membrane pass occupies residues 500–520; sequence TQNMVIGFGLLAGSLLCAYFV. At 521 to 529 the chain is on the lumenal side; the sequence is SERRLQVGD. A helical membrane pass occupies residues 530-550; sequence FVLFGTYITQLYMPLNWFGTY. Over 551 to 836 the chain is Cytoplasmic; it reads YRMIQTNFID…QGQETVPEDS (286 aa). An ABC transporter domain is found at 590-824; that stretch reads VEFENVHFSY…GGVYAEMWQL (235 aa). ATP is bound by residues Tyr599 and 623–634; that span reads GPSGAGKSTILR.

This sequence belongs to the ABC transporter superfamily. ABCB family. Heavy Metal importer (TC 3.A.1.210) subfamily. In terms of assembly, homodimer. N-glycosylated. Ubiquitously expressed. Highly expressed in testis by meiotic pachytene spermatocytes and post-meiotic early spermatids.

Its subcellular location is the cell membrane. The protein localises to the mitochondrion outer membrane. The protein resides in the endoplasmic reticulum membrane. It is found in the golgi apparatus membrane. It localises to the endosome membrane. Its subcellular location is the lysosome membrane. The protein localises to the late endosome membrane. The protein resides in the early endosome membrane. It is found in the secreted. It localises to the extracellular exosome. Its subcellular location is the mitochondrion. The protein localises to the endosome. The protein resides in the multivesicular body membrane. It is found in the melanosome membrane. It carries out the reaction heme b(in) + ATP + H2O = heme b(out) + ADP + phosphate + H(+). The enzyme catalyses coproporphyrin III(in) + ATP + H2O = coproporphyrin III(out) + ADP + phosphate + H(+). The catalysed reaction is pheophorbide a(in) + ATP + H2O = pheophorbide a(out) + ADP + phosphate + H(+). It catalyses the reaction coproporphyrinogen III(in) + ATP + H2O = coproporphyrinogen III(out) + ADP + phosphate + H(+). It carries out the reaction protoporphyrin IX(in) + ATP + H2O = protoporphyrin IX(out) + ADP + phosphate + H(+). The enzyme catalyses coproporphyrin I(in) + ATP + H2O = coproporphyrin I(out) + ADP + phosphate + H(+). The catalysed reaction is uroporphyrin I(in) + ATP + H2O = uroporphyrin I(out) + ADP + phosphate + H(+). It catalyses the reaction uroporphyrin III(in) + ATP + H2O = uroporphyrin III(out) + ADP + phosphate + H(+). In terms of biological role, ATP-dependent transporter that catalyzes the transport of a broad-spectrum of porphyrins from the cytoplasm to the extracellular space through the plasma membrane or into the vesicle lumen. May also function as an ATP-dependent importer of porphyrins from the cytoplasm into the mitochondria, in turn may participate in the de novo heme biosynthesis regulation and in the coordination of heme and iron homeostasis during phenylhydrazine stress. May play a key role in the early steps of melanogenesis producing PMEL amyloid fibrils. In vitro, it confers to cells a resistance to toxic metal such as arsenic and cadmium and against chemotherapeutics agent such as 5-fluorouracil, SN-38 and vincristin. In addition may play a role in the transition metal homeostasis. This is ATP-binding cassette sub-family B member 6 from Rattus norvegicus (Rat).